A 674-amino-acid chain; its full sequence is Bacterioopsin transcriptional activator (674 aa).

In terms of domain architecture, Response regulatory spans 19–131; sequence GVLFAGSDPE…DATAAIADRI (113 aa). The region spanning 156 to 229 is the PAS domain; it reads ERRLKEQALD…AEFWTAITED (74 aa). The PAC domain maps to 230–284; that stretch reads HDTQVVLRNYRRDGSLFWNQVDISPIYDEDGTVSHYVGFQMDVSERMAAQQELQG. The GAF domain maps to 285-454; it reads ERQSLDRLLD…NDALTRRTIA (170 aa). In terms of domain architecture, HTH bat-type spans 617–668; the sequence is LTDRQLTALQKAYVSGYFEWPRRAEGKQLAESMDIVPSTYHQHLQAAKQKLV.

Involved in activating bop (bacterioopsin) and brp gene expression at low-oxygen tension, which naturally occurs in stationary phase. The chain is Bacterioopsin transcriptional activator (bat) from Halobacterium salinarum (strain ATCC 700922 / JCM 11081 / NRC-1) (Halobacterium halobium).